The following is a 178-amino-acid chain: uncharacterized protein (178 aa).

An MSP domain is found at 52 to 177 (HIAIEDRAHQ…RRLPASFLST (126 aa)).

This is an uncharacterized protein from Caenorhabditis elegans.